The chain runs to 184 residues: dTTP/UTP pyrophosphatase (184 aa).

Asp65 (proton acceptor) is an active-site residue.

The protein belongs to the Maf family. YhdE subfamily. It depends on a divalent metal cation as a cofactor.

Its subcellular location is the cytoplasm. It catalyses the reaction dTTP + H2O = dTMP + diphosphate + H(+). It carries out the reaction UTP + H2O = UMP + diphosphate + H(+). Functionally, nucleoside triphosphate pyrophosphatase that hydrolyzes dTTP and UTP. May have a dual role in cell division arrest and in preventing the incorporation of modified nucleotides into cellular nucleic acids. The chain is dTTP/UTP pyrophosphatase from Thermococcus onnurineus (strain NA1).